Consider the following 103-residue polypeptide: NADH-quinone oxidoreductase subunit K (103 aa).

3 helical membrane-spanning segments follow: residues 7 to 27, 31 to 51, and 65 to 85; these read TEHGLYLAAALFILGLIGVLV, LIFMLLSLEIMLNATGLAFIV, and FMLILTLAAAEAAVALALILL.

This sequence belongs to the complex I subunit 4L family. As to quaternary structure, NDH-1 is composed of 14 different subunits. Subunits NuoA, H, J, K, L, M, N constitute the membrane sector of the complex.

The protein resides in the cell inner membrane. The catalysed reaction is a quinone + NADH + 5 H(+)(in) = a quinol + NAD(+) + 4 H(+)(out). NDH-1 shuttles electrons from NADH, via FMN and iron-sulfur (Fe-S) centers, to quinones in the respiratory chain. The immediate electron acceptor for the enzyme in this species is believed to be ubiquinone. Couples the redox reaction to proton translocation (for every two electrons transferred, four hydrogen ions are translocated across the cytoplasmic membrane), and thus conserves the redox energy in a proton gradient. This Nitrosococcus oceani (strain ATCC 19707 / BCRC 17464 / JCM 30415 / NCIMB 11848 / C-107) protein is NADH-quinone oxidoreductase subunit K.